The sequence spans 138 residues: Basic phospholipase A2 PL-Y (138 aa).

The first 16 residues, 1-16 (MRTLWIMAVLLVGVEG), serve as a signal peptide directing secretion. Cystine bridges form between cysteine 42–cysteine 131, cysteine 44–cysteine 60, cysteine 59–cysteine 111, cysteine 65–cysteine 138, cysteine 66–cysteine 104, cysteine 73–cysteine 97, and cysteine 91–cysteine 102. 3 residues coordinate Ca(2+): tyrosine 43, glycine 45, and glycine 47. Histidine 63 is a catalytic residue. A Ca(2+)-binding site is contributed by aspartate 64. Residue aspartate 105 is part of the active site.

This sequence belongs to the phospholipase A2 family. Group II subfamily. D49 sub-subfamily. Requires Ca(2+) as cofactor. As to expression, expressed by the venom gland.

It localises to the secreted. The enzyme catalyses a 1,2-diacyl-sn-glycero-3-phosphocholine + H2O = a 1-acyl-sn-glycero-3-phosphocholine + a fatty acid + H(+). Functionally, snake venom phospholipase A2 (PLA2) that can cleave arachidonate at the sn-2 position from phospholipides in the micellar state or in bilayer membranes. PLA2 catalyzes the calcium-dependent hydrolysis of the 2-acyl groups in 3-sn-phosphoglycerides. In Protobothrops flavoviridis (Habu), this protein is Basic phospholipase A2 PL-Y.